We begin with the raw amino-acid sequence, 451 residues long: Zinc metalloproteinase nas-16 (451 aa).

Residues 70–273 enclose the Peptidase M12A domain; it reads QVVTKLFSPQ…LTINTAYNCK (204 aa). Disulfide bonds link Cys127–Cys272, Cys148–Cys167, Cys274–Cys291, and Cys296–Cys305. N-linked (GlcNAc...) asparagine glycosylation is present at Asn133. His175 contributes to the Zn(2+) binding site. The active site involves Glu176. Positions 179 and 185 each coordinate Zn(2+). The 40-residue stretch at 267-306 folds into the EGF-like domain; that stretch reads NTAYNCKCPSELLCANGGYTNPSNCLECICPLGYGGVLCD. Asn363 and Asn438 each carry an N-linked (GlcNAc...) asparagine glycan.

Zn(2+) is required as a cofactor.

It is found in the secreted. Functionally, metalloprotease. In Caenorhabditis elegans, this protein is Zinc metalloproteinase nas-16 (nas-16).